The following is a 71-amino-acid chain: Calcium dodecin (71 aa).

A Ca(2+)-binding site is contributed by Glu-18.

Belongs to the dodecin family. As to quaternary structure, homododecamer; 12 subunits assemble to form a hollow sphere with a diameter of about 75 Angstroms. Calcium ions are bound at the interface between three subunits.

Binds calcium ions. May play a role in sequestering additional small ligands. The polypeptide is Calcium dodecin (secE2) (Mycobacterium tuberculosis (strain ATCC 25618 / H37Rv)).